The sequence spans 244 residues: EEF1A lysine methyltransferase 2 (244 aa).

The interval 1–27 (MNADAEGHSGAVVPAQSPEGSSAADDF) is disordered. Position 21 is a phosphoserine (serine 21).

The protein belongs to the class I-like SAM-binding methyltransferase superfamily. EFM4 family.

It is found in the cytoplasm. The protein resides in the nucleus. It carries out the reaction L-lysyl-[protein] + 3 S-adenosyl-L-methionine = N(6),N(6),N(6)-trimethyl-L-lysyl-[protein] + 3 S-adenosyl-L-homocysteine + 3 H(+). Functionally, protein-lysine methyltransferase that selectively catalyzes the trimethylation of EEF1A at 'Lys-318'. The polypeptide is EEF1A lysine methyltransferase 2 (Mus musculus (Mouse)).